The chain runs to 454 residues: Protoheme IX farnesyltransferase 1 (454 aa).

The unknown stretch occupies residues 1 to 186; the sequence is MRTTGFSGLL…AYFELTKPRL (186 aa). The next 4 helical transmembrane spans lie at 9 to 29, 59 to 79, 87 to 107, and 113 to 133; these read LLSATVVGVYVLVVVGATAAL, GVAAVVGLLVIATAVVGWSET, LALALALYPAQVVLGALVATG, and LHLFVAMAIFAVLVVGLAWHL. The interval 137–164 is disordered; it reads TGSDDAPESPPELAPPVDEEPAATEQPA. Transmembrane regions (helical) follow at residues 186-206, 209-229, 251-271, 276-296, 300-320, 321-341, 377-397, 398-418, and 433-453; these read LMWLLCLVAGAGMVIAGTPTV, VVFTLGGGVLAIGASGTFNHV, VPVANALAFGGLLAVASLWAF, LLAAALGLAAIAFYSVVYTLI, NTVQNTVIGGAAGALPALIGY, AAVTGTIGIGGLVLAAVIFLW, HIVFYLGATLLGAGALAAVTD, LGWLYAATAVLAAGVFLWAVV, and FHASNAYLGLVLVAILIDSLA. Residues 187-451 form a protoheme IX prenyltransferase region; sequence MWLLCLVAGA…LVLVAILIDS (265 aa).

The protein in the C-terminal section; belongs to the UbiA prenyltransferase family. Protoheme IX farnesyltransferase subfamily.

The protein localises to the cell membrane. The catalysed reaction is heme b + (2E,6E)-farnesyl diphosphate + H2O = Fe(II)-heme o + diphosphate. Its pathway is porphyrin-containing compound metabolism; heme O biosynthesis; heme O from protoheme: step 1/1. Its function is as follows. Converts heme B (protoheme IX) to heme O by substitution of the vinyl group on carbon 2 of heme B porphyrin ring with a hydroxyethyl farnesyl side group. The sequence is that of Protoheme IX farnesyltransferase 1 (ctaB1) from Natronomonas pharaonis (strain ATCC 35678 / DSM 2160 / CIP 103997 / JCM 8858 / NBRC 14720 / NCIMB 2260 / Gabara) (Halobacterium pharaonis).